The following is a 241-amino-acid chain: Pyridoxine 5'-phosphate synthase (241 aa).

Residue N7 coordinates 3-amino-2-oxopropyl phosphate. 9–10 (DH) contributes to the 1-deoxy-D-xylulose 5-phosphate binding site. R18 provides a ligand contact to 3-amino-2-oxopropyl phosphate. Residue H43 is the Proton acceptor of the active site. Positions 45 and 50 each coordinate 1-deoxy-D-xylulose 5-phosphate. E70 acts as the Proton acceptor in catalysis. Residue T100 participates in 1-deoxy-D-xylulose 5-phosphate binding. The active-site Proton donor is the H191. Residues G192 and 213–214 (GH) each bind 3-amino-2-oxopropyl phosphate.

It belongs to the PNP synthase family. In terms of assembly, homooctamer; tetramer of dimers.

Its subcellular location is the cytoplasm. It catalyses the reaction 3-amino-2-oxopropyl phosphate + 1-deoxy-D-xylulose 5-phosphate = pyridoxine 5'-phosphate + phosphate + 2 H2O + H(+). It functions in the pathway cofactor biosynthesis; pyridoxine 5'-phosphate biosynthesis; pyridoxine 5'-phosphate from D-erythrose 4-phosphate: step 5/5. Functionally, catalyzes the complicated ring closure reaction between the two acyclic compounds 1-deoxy-D-xylulose-5-phosphate (DXP) and 3-amino-2-oxopropyl phosphate (1-amino-acetone-3-phosphate or AAP) to form pyridoxine 5'-phosphate (PNP) and inorganic phosphate. This is Pyridoxine 5'-phosphate synthase from Solidesulfovibrio magneticus (strain ATCC 700980 / DSM 13731 / RS-1) (Desulfovibrio magneticus).